The sequence spans 387 residues: MATTKSFLILIVMILATTSSTFASLEEMVTVLSIDGGGIKGIIPGTILEFLGGQLQKMDNNADARLADYFDVIGGTSTGGLLTAMITTPNENNRPFAAANEIVPFYFEHGPHIFNSSTGQFFGPKYDGKYLMQVLQEKLGETRVHQALTEVAISSFDIKTNKPVIFTKSNLAKSPELDAKMYDICYSTAAAPIYFPPHYFITHTSNGDIYEFNLVDGGVATVGDPALLSLSVATRLAQEDPAFSSIKSLDYKQMLLLSLGTGTNSEFDKTYTAQEAAKWGPLRWMLAIRQMTNAASSYMADYYISTVFQARHSQNNYLRVQENALTGTTTEMDDASEANMELLVQVGETLLKKPVSKDSPETYEEALKRFAKLLSDRKKLRANKASY.

The signal sequence occupies residues 1 to 23 (MATTKSFLILIVMILATTSSTFA). One can recognise a PNPLA domain in the interval 32–230 (LSIDGGGIKG…TVGDPALLSL (199 aa)). The GXGXXG motif lies at 36 to 41 (GGGIKG). The GXSXG motif lies at 75-79 (GTSTG). The active-site Nucleophile is the serine 77. An N-linked (GlcNAc...) asparagine glycan is attached at asparagine 115. Aspartate 216 (proton acceptor) is an active-site residue. Positions 216 to 218 (DGG) match the DGA/G motif. Residues 322–385 (ENALTGTTTE…DRKKLRANKA (64 aa)) adopt a coiled-coil conformation.

This sequence belongs to the patatin family. In terms of tissue distribution, tuber.

It localises to the vacuole. Probable lipolytic acyl hydrolase (LAH), an activity which is thought to be involved in the response of tubers to pathogens. This chain is Patatin-12, found in Solanum tuberosum (Potato).